Here is a 182-residue protein sequence, read N- to C-terminus: Protein Syd (182 aa).

This sequence belongs to the Syd family.

The protein resides in the cell inner membrane. Interacts with the SecY protein in vivo. May bind preferentially to an uncomplexed state of SecY, thus functioning either as a chelating agent for excess SecY in the cell or as a regulatory factor that negatively controls the translocase function. In Aeromonas salmonicida (strain A449), this protein is Protein Syd.